Here is a 354-residue protein sequence, read N- to C-terminus: MSLDKIMNEAISPWMKGDGPDSDIVLSSRIRLARNFKQYQFSTMQNEEEAQKVQELFKKKFINKAVEPFGKFGLLKMNELTPLQRRVLVEKHLISPNLAGTEYGACLLSESEHISVMLNEEDHIRIQCLFPGLQLSKALQSANQIDNWIEKEVEYAFDESLGYITSCPTNVGTGLRASVMIHLPGLVLTKRISRIIQVIQKLGLVVRGIYGEGSEALGNIFQVSNQMTLGKSEEDIIADLKSVMQQIIQQEKLARELIVQNSSIELEDKVYRSYGILANSRLIQSAEAATCLSDVRLGIDLGYIKGISRNILTELMVLTQPGILQQYAGGPLGPEERDYRRATLIRERLRIEKN.

A Phosphagen kinase C-terminal domain is found at Ile-24–Ala-254. ATP is bound by residues Ser-27–Arg-31, His-92, Arg-125, Arg-176–Met-180, and Arg-207–Glu-212. The RDXXRA motif of the pArg binding pocket involved in allosteric regulation motif lies at Arg-337–Ala-342.

The protein belongs to the ATP:guanido phosphotransferase family.

It catalyses the reaction L-arginyl-[protein] + ATP = N(omega)-phospho-L-arginyl-[protein] + ADP + H(+). With respect to regulation, appears to be allosterically activated by the binding of pArg-containing polypeptides to the pArg-binding pocket localized in the C-terminal domain of McsB. Functionally, catalyzes the specific phosphorylation of arginine residues in a large number of proteins. Is part of the bacterial stress response system. Protein arginine phosphorylation has a physiologically important role and is involved in the regulation of many critical cellular processes, such as protein homeostasis, motility, competence, and stringent and stress responses, by regulating gene expression and protein activity. The chain is Protein-arginine kinase from Bacillus cereus (strain B4264).